Reading from the N-terminus, the 92-residue chain is Small ribosomal subunit protein uS19c (92 aa).

Belongs to the universal ribosomal protein uS19 family.

The protein localises to the plastid. Functionally, protein S19 forms a complex with S13 that binds strongly to the 16S ribosomal RNA. In Cuscuta obtusiflora (Peruvian dodder), this protein is Small ribosomal subunit protein uS19c.